Consider the following 142-residue polypeptide: Hemoglobin subunit zeta (142 aa).

At serine 2 the chain carries N-acetylserine. The Globin domain occupies 2-142 (SLTKAERTMV…VSSVLTEKYR (141 aa)). Serine 53 bears the Phosphoserine mark. A heme b-binding site is contributed by histidine 59. The residue at position 73 (serine 73) is a Phosphoserine. Heme b is bound at residue histidine 88.

Belongs to the globin family. Heterotetramer of two zeta chains and beta-type chains.

The zeta chain is an alpha-type chain of mammalian embryonic hemoglobin. This is Hemoglobin subunit zeta (HBZ1) from Equus caballus (Horse).